The sequence spans 594 residues: Proteasome-associated ATPase (594 aa).

The segment covering 1-10 has biased composition (polar residues); it reads MMETPNNDSS. A disordered region spans residues 1 to 23; the sequence is MMETPNNDSSRTPDEAAGAPDPE. A coiled-coil region spans residues 35–86; that stretch reads ADRQVNILRDKLRHIDRQLAAATQNNSKLVGMLETAKAEILRLKNALDQEGQ. ATP is bound at residue 282–287; that stretch reads GCGKTL. The segment at 593–594 is docks into pockets in the proteasome alpha-ring; the sequence is YL.

It belongs to the AAA ATPase family. Homohexamer. Assembles into a hexameric ring structure that caps the 20S proteasome core. Strongly interacts with the prokaryotic ubiquitin-like protein Pup through a hydrophobic interface; the interacting region of ARC lies in its N-terminal coiled-coil domain. There is one Pup binding site per ARC hexamer ring. Upon ATP-binding, the C-terminus of ARC interacts with the alpha-rings of the proteasome core, possibly by binding to the intersubunit pockets.

Its pathway is protein degradation; proteasomal Pup-dependent pathway. Its function is as follows. ATPase which is responsible for recognizing, binding, unfolding and translocation of pupylated proteins into the bacterial 20S proteasome core particle. May be essential for opening the gate of the 20S proteasome via an interaction with its C-terminus, thereby allowing substrate entry and access to the site of proteolysis. Thus, the C-termini of the proteasomal ATPase may function like a 'key in a lock' to induce gate opening and therefore regulate proteolysis. The protein is Proteasome-associated ATPase of Arthrobacter sp. (strain FB24).